Consider the following 333-residue polypeptide: Phosphate acetyltransferase (333 aa).

This sequence belongs to the phosphate acetyltransferase and butyryltransferase family.

The protein localises to the cytoplasm. It catalyses the reaction acetyl-CoA + phosphate = acetyl phosphate + CoA. It functions in the pathway metabolic intermediate biosynthesis; acetyl-CoA biosynthesis; acetyl-CoA from acetate: step 2/2. This Clostridium acetobutylicum (strain ATCC 824 / DSM 792 / JCM 1419 / IAM 19013 / LMG 5710 / NBRC 13948 / NRRL B-527 / VKM B-1787 / 2291 / W) protein is Phosphate acetyltransferase (pta).